Consider the following 931-residue polypeptide: Dual serine/threonine and tyrosine protein kinase (931 aa).

The disordered stretch occupies residues 1–24; the sequence is MEGDAPQRVSERVSGPGPGGGGGG. A coiled-coil region spans residues 397–424; that stretch reads RKKENELYESLMNIANRKQEEMKDMICE. In terms of domain architecture, Protein kinase spans 654–908; the sequence is PKLGQELGRG…PLLGIVQPML (255 aa). Residues 660 to 668 and lysine 683 contribute to the ATP site; that span reads LGRGQYGVV. Aspartate 779 functions as the Proton acceptor in the catalytic mechanism.

The protein belongs to the protein kinase superfamily. Ser/Thr protein kinase family.

The protein localises to the cytoplasm. It is found in the cell membrane. The protein resides in the apical cell membrane. Its subcellular location is the basolateral cell membrane. It localises to the cell junction. The catalysed reaction is L-seryl-[protein] + ATP = O-phospho-L-seryl-[protein] + ADP + H(+). The enzyme catalyses L-threonyl-[protein] + ATP = O-phospho-L-threonyl-[protein] + ADP + H(+). It catalyses the reaction L-tyrosyl-[protein] + ATP = O-phospho-L-tyrosyl-[protein] + ADP + H(+). Acts as a positive regulator of ERK phosphorylation downstream of fibroblast growth factor-receptor activation. Involved in the regulation of both caspase-dependent apoptosis and caspase-independent cell death. In the skin, it plays a predominant role in suppressing caspase-dependent apoptosis in response to UV stress in a range of dermal cell types. The chain is Dual serine/threonine and tyrosine protein kinase (DSTYK) from Canis lupus familiaris (Dog).